A 156-amino-acid chain; its full sequence is ATP synthase subunit b (156 aa).

The helical transmembrane segment at 7–27 (LFVQAIVFLILVLFTMKFVWP) threads the bilayer.

It belongs to the ATPase B chain family. F-type ATPases have 2 components, F(1) - the catalytic core - and F(0) - the membrane proton channel. F(1) has five subunits: alpha(3), beta(3), gamma(1), delta(1), epsilon(1). F(0) has three main subunits: a(1), b(2) and c(10-14). The alpha and beta chains form an alternating ring which encloses part of the gamma chain. F(1) is attached to F(0) by a central stalk formed by the gamma and epsilon chains, while a peripheral stalk is formed by the delta and b chains.

It localises to the cell inner membrane. F(1)F(0) ATP synthase produces ATP from ADP in the presence of a proton or sodium gradient. F-type ATPases consist of two structural domains, F(1) containing the extramembraneous catalytic core and F(0) containing the membrane proton channel, linked together by a central stalk and a peripheral stalk. During catalysis, ATP synthesis in the catalytic domain of F(1) is coupled via a rotary mechanism of the central stalk subunits to proton translocation. In terms of biological role, component of the F(0) channel, it forms part of the peripheral stalk, linking F(1) to F(0). The sequence is that of ATP synthase subunit b from Acidovorax sp. (strain JS42).